A 152-amino-acid polypeptide reads, in one-letter code: Ubiquitin-conjugating enzyme E2 B (152 aa).

One can recognise a UBC core domain in the interval 4 to 150 (PARRRLMRDF…VSAIVEQSWN (147 aa)). Residue C88 is the Glycyl thioester intermediate of the active site.

Belongs to the ubiquitin-conjugating enzyme family. In terms of assembly, interacts with RAD18, UBR2 and WAC.

Its subcellular location is the cell membrane. The protein localises to the nucleus. It catalyses the reaction S-ubiquitinyl-[E1 ubiquitin-activating enzyme]-L-cysteine + [E2 ubiquitin-conjugating enzyme]-L-cysteine = [E1 ubiquitin-activating enzyme]-L-cysteine + S-ubiquitinyl-[E2 ubiquitin-conjugating enzyme]-L-cysteine.. It functions in the pathway protein modification; protein ubiquitination. Its function is as follows. E2 ubiquitin-conjugating enzyme that accepts ubiquitin from the ubiquitin-activating enzyme E1 and transfers it to a E3 ubiquitin-protein ligase. In vitro catalyzes 'Lys-11'-, as well as 'Lys-48'- and 'Lys-63'-linked polyubiquitination. Together with the E3 enzyme BRE1 (RNF20 and/or RNF40), plays a role in transcription regulation by catalyzing the monoubiquitination of histone H2B at 'Lys-120' to form H2BK120ub1. H2BK120ub1 gives a specific tag for epigenetic transcriptional activation, elongation by RNA polymerase II, telomeric silencing, and is also a prerequisite for H3K4me and H3K79me formation. May play a role in DNA repair. Associates to the E3 ligase RAD18 to form the UBE2B-RAD18 ubiquitin ligase complex involved in mono-ubiquitination of DNA-associated PCNA on 'Lys-164'. In association with the E3 enzyme UBR4, is involved in N-end rule-dependent protein degradation. May be involved in neurite outgrowth. The chain is Ubiquitin-conjugating enzyme E2 B (UBE2B) from Bos taurus (Bovine).